We begin with the raw amino-acid sequence, 140 residues long: MAKVNTYETLFILDSNHYARDPGGVAKQLEELIAENGGEVQVSRMWMEQKLAYPIDKHQKGTYYLIYFSMEGPNLTQLARAFALAEPVIRELTIKLDPRLVEPILANARGEHFTGPAGAEGSDDESTESTDEAVAETADA.

Positions 111–140 (EHFTGPAGAEGSDDESTESTDEAVAETADA) are disordered. Acidic residues predominate over residues 121–140 (GSDDESTESTDEAVAETADA).

The protein belongs to the bacterial ribosomal protein bS6 family.

Its function is as follows. Binds together with bS18 to 16S ribosomal RNA. This is Small ribosomal subunit protein bS6 from Rhodopirellula baltica (strain DSM 10527 / NCIMB 13988 / SH1).